Consider the following 136-residue polypeptide: MSLIVYFSSRSENTHRFVQRLGLPAVRIPLNEREHLRVDEPYILIVPSYGGGGTAGAVPRQAIRFLNDVHNRQLIRGVIAAGNRNFGDGWGRAGDVIAQKCAVPYLYRFELMGTPDDINTVRKGVSEFWQRQPQNV.

Belongs to the NrdI family.

Probably involved in ribonucleotide reductase function. In Klebsiella pneumoniae subsp. pneumoniae (strain ATCC 700721 / MGH 78578), this protein is Protein NrdI.